Here is an 883-residue protein sequence, read N- to C-terminus: Sodium/sulfate cotransporter 2 (883 aa).

6 helical membrane passes run 3-23 (FGWQ…VMAA), 30-50 (VTFT…VTVA), 60-80 (GLLT…TGGL), 106-126 (MCLS…PILI), 139-159 (LLIP…IGTS), and 185-205 (IFDI…FILL). RCK C-terminal domains are found at residues 211-295 (LPGN…EFGL), 317-401 (VFTP…SKNN), 406-491 (VRAV…FPGL), and 497-583 (EQVD…DKSF). The next 6 helical transmembrane spans lie at 600-620 (MVIG…GGLK), 624-644 (YIHL…TGCM), 657-677 (VYLT…TGVA), 693-713 (SDGA…ELLT), 774-794 (FAII…FILC), and 802-822 (VWIV…LYFL). The segment at 857–883 (QASRTGSDGTGSSDSPRALGVPKVITA) is disordered. Low complexity predominate over residues 861–871 (TGSDGTGSSDS).

This sequence belongs to the divalent anion:Na+ symporter (DASS) superfamily. Na+/sulfate symporter (TC 2.A.47.4) family.

It localises to the cell membrane. Functionally, na(+)/sulfate cotransporter with a probable high-affinity for sulfate and a proteasome dependent turnover. The polypeptide is Sodium/sulfate cotransporter 2 (SLT2) (Chlamydomonas reinhardtii (Chlamydomonas smithii)).